The primary structure comprises 185 residues: Elongation factor P (185 aa).

Belongs to the elongation factor P family.

Its subcellular location is the cytoplasm. The protein operates within protein biosynthesis; polypeptide chain elongation. In terms of biological role, involved in peptide bond synthesis. Stimulates efficient translation and peptide-bond synthesis on native or reconstituted 70S ribosomes in vitro. Probably functions indirectly by altering the affinity of the ribosome for aminoacyl-tRNA, thus increasing their reactivity as acceptors for peptidyl transferase. In Lactococcus lactis subsp. lactis (strain IL1403) (Streptococcus lactis), this protein is Elongation factor P (efp).